The primary structure comprises 457 residues: tRNA-2-methylthio-N(6)-dimethylallyladenosine synthase (457 aa).

The MTTase N-terminal domain maps to 19 to 134; the sequence is RKLFIETYGC…LPNLVGAVEH (116 aa). 6 residues coordinate [4Fe-4S] cluster: Cys28, Cys64, Cys98, Cys172, Cys176, and Cys179. Residues 158 to 390 form the Radical SAM core domain; that stretch reads PGVHISGFVS…IDLQNKLSEE (233 aa). The region spanning 393–456 is the TRAM domain; it reads LRDIGKTFEV…SATLFGEPVE (64 aa).

This sequence belongs to the methylthiotransferase family. MiaB subfamily. Monomer. It depends on [4Fe-4S] cluster as a cofactor.

Its subcellular location is the cytoplasm. It catalyses the reaction N(6)-dimethylallyladenosine(37) in tRNA + (sulfur carrier)-SH + AH2 + 2 S-adenosyl-L-methionine = 2-methylsulfanyl-N(6)-dimethylallyladenosine(37) in tRNA + (sulfur carrier)-H + 5'-deoxyadenosine + L-methionine + A + S-adenosyl-L-homocysteine + 2 H(+). Catalyzes the methylthiolation of N6-(dimethylallyl)adenosine (i(6)A), leading to the formation of 2-methylthio-N6-(dimethylallyl)adenosine (ms(2)i(6)A) at position 37 in tRNAs that read codons beginning with uridine. The protein is tRNA-2-methylthio-N(6)-dimethylallyladenosine synthase of Parabacteroides distasonis (strain ATCC 8503 / DSM 20701 / CIP 104284 / JCM 5825 / NCTC 11152).